Reading from the N-terminus, the 421-residue chain is Acetate kinase (421 aa).

Asparagine 7 contacts Mg(2+). Residue lysine 14 participates in ATP binding. Arginine 91 contributes to the substrate binding site. Aspartate 148 (proton donor/acceptor) is an active-site residue. ATP-binding positions include 208 to 212 and 283 to 285; these read HIGNG and DRR. Glutamate 387 provides a ligand contact to Mg(2+).

This sequence belongs to the acetokinase family. As to quaternary structure, homodimer. The cofactor is Mg(2+). Mn(2+) is required as a cofactor.

The protein localises to the cytoplasm. It catalyses the reaction acetate + ATP = acetyl phosphate + ADP. Its pathway is metabolic intermediate biosynthesis; acetyl-CoA biosynthesis; acetyl-CoA from acetate: step 1/2. Functionally, catalyzes the formation of acetyl phosphate from acetate and ATP. Can also catalyze the reverse reaction. This is Acetate kinase from Geobacter metallireducens (strain ATCC 53774 / DSM 7210 / GS-15).